The chain runs to 603 residues: Autophagy-related protein 13a (603 aa).

At Ser-248 the chain carries Phosphoserine. Disordered regions lie at residues 258–477 (PSPG…DDLD) and 498–518 (SHSL…PLGR). A compositionally biased stretch (polar residues) spans 301–315 (ATPNQSFSPAQSHQL). Residues 320–331 (HDFHWSRTDAFG) are compositionally biased toward basic and acidic residues. Composition is skewed to polar residues over residues 371 to 386 (IPSS…SNFS) and 419 to 437 (SSRS…PTQK). A compositionally biased stretch (low complexity) spans 453 to 473 (LSSSDSPRFAFSRSPSRLSSQ).

Belongs to the ATG13 family. Plant subfamily. As to quaternary structure, interacts with ATG1A. Interacts with ATG11 and ATG101. Post-translationally, phosphorylated during nutrient starvation. Dephosphorylated in nutrient-rich conditions.

The protein localises to the cytoplasmic vesicle. The protein resides in the autophagosome. In terms of biological role, involved in autophagy in a nutritional condition dependent manner. The ATG1-ATG13 protein kinase complex regulates downstream events required for autophagosome enclosure and/or vacuolar delivery. Becomes a target of autophagy under nutrient starvation. Connects autophagy to plant nutritional status. The sequence is that of Autophagy-related protein 13a from Arabidopsis thaliana (Mouse-ear cress).